The sequence spans 732 residues: Polyribonucleotide nucleotidyltransferase (732 aa).

Asp483 and Asp489 together coordinate Mg(2+). The region spanning 550–609 (PRIVTVQIPVDKIGELIGPKGKNIRGIQDETGAELSVEDDGTVTIAAVGGDSMERAKQMV) is the KH domain. One can recognise an S1 motif domain in the interval 619–687 (GETYEGTVKT…ERGRLRLSMK (69 aa)). The tract at residues 684–732 (LSMKALLPKPEGMPDEPPQSERPRRDDGERSGGDRGGRGGRNGGGRDRR) is disordered. Residues 702 to 720 (QSERPRRDDGERSGGDRGG) are compositionally biased toward basic and acidic residues.

This sequence belongs to the polyribonucleotide nucleotidyltransferase family. Requires Mg(2+) as cofactor.

It localises to the cytoplasm. It carries out the reaction RNA(n+1) + phosphate = RNA(n) + a ribonucleoside 5'-diphosphate. Involved in mRNA degradation. Catalyzes the phosphorolysis of single-stranded polyribonucleotides processively in the 3'- to 5'-direction. The protein is Polyribonucleotide nucleotidyltransferase of Gemmatimonas aurantiaca (strain DSM 14586 / JCM 11422 / NBRC 100505 / T-27).